The sequence spans 422 residues: GTPase Obg (422 aa).

One can recognise an Obg domain in the interval 2-157; that stretch reads AKFIDEIKLT…YLAHIVLKVM (156 aa). Residues 158–325 form the OBG-type G domain; it reads SDVGIIGKPS…LKGKIWKILE (168 aa). GTP contacts are provided by residues 164-171, 189-193, 210-213, 279-282, and 306-308; these read GKPSAGKS, FTTLV, DLPG, NKSD, and SAI. Mg(2+) is bound by residues serine 171 and threonine 191. The OCT domain occupies 334–420; sequence EEEETEENVE…ILDYEFEWDG (87 aa).

This sequence belongs to the TRAFAC class OBG-HflX-like GTPase superfamily. OBG GTPase family. Monomer. It depends on Mg(2+) as a cofactor.

Its subcellular location is the cytoplasm. Its function is as follows. An essential GTPase which binds GTP, GDP and possibly (p)ppGpp with moderate affinity, with high nucleotide exchange rates and a fairly low GTP hydrolysis rate. Plays a role in control of the cell cycle, stress response, ribosome biogenesis and in those bacteria that undergo differentiation, in morphogenesis control. The protein is GTPase Obg of Mycoplasmopsis agalactiae (strain NCTC 10123 / CIP 59.7 / PG2) (Mycoplasma agalactiae).